Here is a 75-residue protein sequence, read N- to C-terminus: Metallothionein-like protein 1 (75 aa).

The protein belongs to the metallothionein superfamily. Type 15 family.

Functionally, metallothioneins have a high content of cysteine residues that bind various heavy metals. The sequence is that of Metallothionein-like protein 1 (MT1B) from Trifolium repens (Creeping white clover).